Reading from the N-terminus, the 33-residue chain is Unknown 31.6 kDa protein from 2D-PAGE (33 aa).

This Onion yellows phytoplasma protein is Unknown 31.6 kDa protein from 2D-PAGE.